The primary structure comprises 447 residues: GTPase Der (447 aa).

2 EngA-type G domains span residues 3–167 and 181–354; these read PVIA…FAER and TRIA…AAAM. GTP contacts are provided by residues 9 to 16, 56 to 60, 119 to 122, 187 to 194, 234 to 238, and 299 to 302; these read GRPNVGKS, DTGGF, NKAE, DTAGL, and NKWD. Residues 355 to 439 enclose the KH-like domain; it reads VKLPTPKLTR…PLRIEFRTNK (85 aa).

The protein belongs to the TRAFAC class TrmE-Era-EngA-EngB-Septin-like GTPase superfamily. EngA (Der) GTPase family. In terms of assembly, associates with the 50S ribosomal subunit.

Its function is as follows. GTPase that plays an essential role in the late steps of ribosome biogenesis. In Ralstonia nicotianae (strain ATCC BAA-1114 / GMI1000) (Ralstonia solanacearum), this protein is GTPase Der.